Consider the following 172-residue polypeptide: Large ribosomal subunit protein uL10 (172 aa).

This sequence belongs to the universal ribosomal protein uL10 family. In terms of assembly, part of the ribosomal stalk of the 50S ribosomal subunit. The N-terminus interacts with L11 and the large rRNA to form the base of the stalk. The C-terminus forms an elongated spine to which L12 dimers bind in a sequential fashion forming a multimeric L10(L12)X complex.

Its function is as follows. Forms part of the ribosomal stalk, playing a central role in the interaction of the ribosome with GTP-bound translation factors. The polypeptide is Large ribosomal subunit protein uL10 (Rhizobium rhizogenes (strain K84 / ATCC BAA-868) (Agrobacterium radiobacter)).